A 145-amino-acid polypeptide reads, in one-letter code: Peptide methionine sulfoxide reductase MsrB (145 aa).

The 124-residue stretch at 6-129 folds into the MsrB domain; sequence KNERLQQLTD…NSAALRFIPV (124 aa). Cysteine 118 serves as the catalytic Nucleophile.

It belongs to the MsrB Met sulfoxide reductase family.

It catalyses the reaction L-methionyl-[protein] + [thioredoxin]-disulfide + H2O = L-methionyl-(R)-S-oxide-[protein] + [thioredoxin]-dithiol. The sequence is that of Peptide methionine sulfoxide reductase MsrB from Listeria monocytogenes serovar 1/2a (strain ATCC BAA-679 / EGD-e).